The following is a 366-amino-acid chain: Ferrochelatase (366 aa).

The Fe cation site is built by His209 and Glu290.

This sequence belongs to the ferrochelatase family.

Its subcellular location is the cytoplasm. It catalyses the reaction heme b + 2 H(+) = protoporphyrin IX + Fe(2+). Its pathway is porphyrin-containing compound metabolism; protoheme biosynthesis; protoheme from protoporphyrin-IX: step 1/1. In terms of biological role, catalyzes the ferrous insertion into protoporphyrin IX. This chain is Ferrochelatase, found in Teredinibacter turnerae (strain ATCC 39867 / T7901).